Reading from the N-terminus, the 1018-residue chain is Unconventional myosin-Ig (1018 aa).

N-acetylmethionine is present on M1. The 699-residue stretch at 9–707 (YGKPDFVLLD…TLVTLEQSRA (699 aa)) folds into the Myosin motor domain. 102-109 (GESGAGKT) is an ATP binding site. The tract at residues 584-606 (MVALVENLASKEPFYVRCIKPNE) is actin-binding. One can recognise an IQ domain in the interval 710–739 (IPIIVLLLQKAWRGTLARWRCRRLRAIYTI). The region spanning 824-1017 (GLRQDWGCRR…RGSFTLLWPS (194 aa)) is the TH1 domain.

The protein belongs to the TRAFAC class myosin-kinesin ATPase superfamily. Myosin family. In terms of assembly, interacts with calmodulin; via its IQ motifs. In terms of tissue distribution, specifically expressed in hematopoietic cells.

The protein localises to the cell membrane. The protein resides in the cell projection. It is found in the phagocytic cup. Its function is as follows. Unconventional myosin required during immune response for detection of rare antigen-presenting cells by regulating T-cell migration. Unconventional myosins are actin-based motor molecules with ATPase activity and serve in intracellular movements. Acts as a regulator of T-cell migration by generating membrane tension, enforcing cell-intrinsic meandering search, thereby enhancing detection of rare antigens during lymph-node surveillance, enabling pathogen eradication. Also required in B-cells, where it regulates different membrane/cytoskeleton-dependent processes. Involved in Fc-gamma receptor (Fc-gamma-R) phagocytosis. In terms of biological role, constitutes the minor histocompatibility antigen HA-2. More generally, minor histocompatibility antigens (mHags) refer to immunogenic peptide which, when complexed with MHC, can generate an immune response after recognition by specific T-cells. The peptides are derived from polymorphic intracellular proteins, which are cleaved by normal pathways of antigen processing. The binding of these peptides to MHC class I or class II molecules and their expression on the cell surface can stimulate T-cell responses and thereby trigger graft rejection or graft-versus-host disease (GVHD) after hematopoietic stem cell transplantation from HLA-identical sibling donor. GVHD is a frequent complication after bone marrow transplantation (BMT), due to mismatch of minor histocompatibility antigen in HLA-matched sibling marrow transplants. HA-2 is restricted to MHC class I HLA-A*0201. This Homo sapiens (Human) protein is Unconventional myosin-Ig (MYO1G).